The sequence spans 96 residues: 5-hydroxytryptamine receptor 2B (96 aa).

Residues 1 to 8 (CNQSTLQM) are Extracellular-facing. Asparagine 2 is a glycosylation site (N-linked (GlcNAc...) asparagine). A helical membrane pass occupies residues 9–30 (LLEIFVWIGYVSSGVNPLVYTL). The NPxxY motif; important for ligand-induced conformation changes and signaling signature appears at 24-28 (NPLVY). Over 31–96 (FNKTFRDAFG…STMYQSPVRL (66 aa)) the chain is Cytoplasmic. Cysteine 45 carries S-palmitoyl cysteine lipidation.

It belongs to the G-protein coupled receptor 1 family. As to quaternary structure, interacts (via C-terminus) with MPDZ.

The protein localises to the cell membrane. It is found in the synapse. The protein resides in the synaptosome. Its function is as follows. G-protein coupled receptor for 5-hydroxytryptamine (serotonin). Also functions as a receptor for various ergot alkaloid derivatives and psychoactive substances. Ligand binding causes a conformation change that triggers signaling via guanine nucleotide-binding proteins (G proteins) and modulates the activity of downstream effectors. HTR2B is coupled to G(q)/G(11) G alpha proteins and activates phospholipase C-beta, releasing diacylglycerol (DAG) and inositol 1,4,5-trisphosphate (IP3) second messengers that modulate the activity of phosphatidylinositol 3-kinase and promote the release of Ca(2+) ions from intracellular stores, respectively. Beta-arrestin family members inhibit signaling via G proteins and mediate activation of alternative signaling pathways. Plays a role in the regulation of dopamine and 5-hydroxytryptamine release, 5-hydroxytryptamine uptake and in the regulation of extracellular dopamine and 5-hydroxytryptamine levels, and thereby affects neural activity. May play a role in the perception of pain. Plays a role in the regulation of behavior, including impulsive behavior. Required for normal proliferation of embryonic cardiac myocytes and normal heart development. Protects cardiomyocytes against apoptosis. Plays a role in the adaptation of pulmonary arteries to chronic hypoxia. Plays a role in vasoconstriction. Required for normal osteoblast function and proliferation, and for maintaining normal bone density. Required for normal proliferation of the interstitial cells of Cajal in the intestine. The protein is 5-hydroxytryptamine receptor 2B (HTR2B) of Cavia porcellus (Guinea pig).